Reading from the N-terminus, the 253-residue chain is Mediator of RNA polymerase II transcription subunit 10 (253 aa).

Disordered regions lie at residues 32–63, 88–109, and 206–253; these read YDTNPSSSNNNTPTSSRASGGGGGGGGGHASS, LPSSPSSGPSNNQPQQGTTELE, and VEAT…QSGQ. The segment covering 34 to 47 has biased composition (low complexity); that stretch reads TNPSSSNNNTPTSS. Residues 50–60 are compositionally biased toward gly residues; it reads SGGGGGGGGGH. Residues 88 to 104 are compositionally biased toward low complexity; the sequence is LPSSPSSGPSNNQPQQG. Positions 231–253 are enriched in gly residues; sequence SAGGEGQQGQGQGQQGQGQQSGQ.

The protein belongs to the Mediator complex subunit 10 family. As to quaternary structure, component of the Mediator complex.

The protein resides in the nucleus. In terms of biological role, component of the Mediator complex, a coactivator involved in the regulated transcription of nearly all RNA polymerase II-dependent genes. Mediator functions as a bridge to convey information from gene-specific regulatory proteins to the basal RNA polymerase II transcription machinery. Mediator is recruited to promoters by direct interactions with regulatory proteins and serves as a scaffold for the assembly of a functional preinitiation complex with RNA polymerase II and the general transcription factors. This is Mediator of RNA polymerase II transcription subunit 10 (nut2) from Neurospora crassa (strain ATCC 24698 / 74-OR23-1A / CBS 708.71 / DSM 1257 / FGSC 987).